Reading from the N-terminus, the 611-residue chain is Dihydroxy-acid dehydratase (611 aa).

D82 serves as a coordination point for Mg(2+). C123 contacts [2Fe-2S] cluster. Positions 124 and 125 each coordinate Mg(2+). The residue at position 125 (K125) is an N6-carboxylysine. A [2Fe-2S] cluster-binding site is contributed by C192. E489 contacts Mg(2+). Residue S515 is the Proton acceptor of the active site. Residues 565–574 (ERRKAEEARG) are compositionally biased toward basic and acidic residues. Residues 565–586 (ERRKAEEARGKKAFTPPTRQRE) are disordered.

This sequence belongs to the IlvD/Edd family. Homodimer. Requires [2Fe-2S] cluster as cofactor. Mg(2+) is required as a cofactor.

It carries out the reaction (2R)-2,3-dihydroxy-3-methylbutanoate = 3-methyl-2-oxobutanoate + H2O. The enzyme catalyses (2R,3R)-2,3-dihydroxy-3-methylpentanoate = (S)-3-methyl-2-oxopentanoate + H2O. The protein operates within amino-acid biosynthesis; L-isoleucine biosynthesis; L-isoleucine from 2-oxobutanoate: step 3/4. It functions in the pathway amino-acid biosynthesis; L-valine biosynthesis; L-valine from pyruvate: step 3/4. Functions in the biosynthesis of branched-chain amino acids. Catalyzes the dehydration of (2R,3R)-2,3-dihydroxy-3-methylpentanoate (2,3-dihydroxy-3-methylvalerate) into 2-oxo-3-methylpentanoate (2-oxo-3-methylvalerate) and of (2R)-2,3-dihydroxy-3-methylbutanoate (2,3-dihydroxyisovalerate) into 2-oxo-3-methylbutanoate (2-oxoisovalerate), the penultimate precursor to L-isoleucine and L-valine, respectively. This Parabacteroides distasonis (strain ATCC 8503 / DSM 20701 / CIP 104284 / JCM 5825 / NCTC 11152) protein is Dihydroxy-acid dehydratase.